The sequence spans 575 residues: Preprotein translocase subunit SCY2, chloroplastic (575 aa).

A chloroplast-targeting transit peptide spans 1–34 (MNSSQACFFHFSLRPISLSHPSYAFLSKRDPFLC). 10 helical membrane passes run 157 to 177 (FVTAVLLVLSRVGYFIPLPGF), 206 to 226 (LSLFQLGLSPQIIASIIMQVL), 251 to 271 (IWWLSFFFAIVEALVVAYTSL), 285 to 305 (VMMTSSLLVCGAMTMTWLCDT), 306 to 326 (ISESGFGHGSSLIICVGILTG), 346 to 366 (LPYLLGLLGIFTVVTMFAVVV), 414 to 434 (TTYLLAFPSILASILGSPFLL), 447 to 467 (GAPPWVYYSIYAFFVFLFNIF), 509 to 529 (FWGGLLLSFLATASTVLDHYL), and 531 to 551 (SINQGFSIGFTSVLIIVGSII).

Belongs to the SecY/SEC61-alpha family. In terms of assembly, part of a second Sec protein translocation apparatus. Interacts probably with SECA2. In terms of tissue distribution, ubiquitous.

It is found in the plastid. Its subcellular location is the chloroplast membrane. It localises to the amyloplast membrane. The protein localises to the chloroplast thylakoid membrane. Functionally, involved in protein export. Probably interacts with other proteins to allow the postimport or conservative sorting pathway for inner membrane proteins in plastids. Central subunit of the protein translocation channel SecYE. Consists of two halves formed by TMs 1-5 and 6-10. These two domains form a lateral gate at the front which open onto the bilayer between TMs 2 and 7, and are clamped together by SecE at the back. The channel is closed by both a pore ring composed of hydrophobic SecY resides and a short helix (helix 2A) on the extracellular side of the membrane which forms a plug. The polypeptide is Preprotein translocase subunit SCY2, chloroplastic (SCY2) (Arabidopsis thaliana (Mouse-ear cress)).